The sequence spans 207 residues: Sodium/potassium-transporting ATPase subunit beta-1-interacting protein 1 (207 aa).

3 consecutive transmembrane segments (helical) span residues 2-22 (GRCS…AAAL), 35-55 (APIL…LGTL), and 62-82 (LILY…IICF). Residue Asn-100 is glycosylated (N-linked (GlcNAc...) asparagine). The helical transmembrane segment at 147–167 (ALSSALQIFLALFGFVYACYV) threads the bilayer.

Belongs to the NKAIN family. Interacts with atp1b1 C-terminus.

The protein localises to the cell membrane. The polypeptide is Sodium/potassium-transporting ATPase subunit beta-1-interacting protein 1 (nkain1) (Xenopus laevis (African clawed frog)).